The chain runs to 67 residues: Large ribosomal subunit protein uL29 (67 aa).

Belongs to the universal ribosomal protein uL29 family.

This chain is Large ribosomal subunit protein uL29, found in Magnetococcus marinus (strain ATCC BAA-1437 / JCM 17883 / MC-1).